The sequence spans 766 residues: Protein translocase subunit SecA 2 (766 aa).

ATP is bound by residues Gln-84, 102 to 106, and Asp-490; that span reads GEGKT.

The protein belongs to the SecA family. As to quaternary structure, monomer and homodimer. Part of the essential Sec protein translocation apparatus which comprises SecA, SecYEG and auxiliary proteins SecDF. Other proteins may also be involved.

It localises to the cell membrane. Its subcellular location is the cytoplasm. It carries out the reaction ATP + H2O + cellular proteinSide 1 = ADP + phosphate + cellular proteinSide 2.. Its function is as follows. Part of the Sec protein translocase complex. Interacts with the SecYEG preprotein conducting channel. Has a central role in coupling the hydrolysis of ATP to the transfer of proteins into and across the cell membrane, serving as an ATP-driven molecular motor driving the stepwise translocation of polypeptide chains across the membrane. This is Protein translocase subunit SecA 2 from Thermobifida fusca (strain YX).